The following is a 182-amino-acid chain: ATP-dependent protease subunit HslV (182 aa).

Residue threonine 7 is part of the active site. Positions 162, 165, and 168 each coordinate Na(+).

Belongs to the peptidase T1B family. HslV subfamily. A double ring-shaped homohexamer of HslV is capped on each side by a ring-shaped HslU homohexamer. The assembly of the HslU/HslV complex is dependent on binding of ATP.

It localises to the cytoplasm. It catalyses the reaction ATP-dependent cleavage of peptide bonds with broad specificity.. Allosterically activated by HslU binding. Its function is as follows. Protease subunit of a proteasome-like degradation complex believed to be a general protein degrading machinery. In Legionella pneumophila (strain Lens), this protein is ATP-dependent protease subunit HslV.